Here is a 1346-residue protein sequence, read N- to C-terminus: Toll-like receptor Tollo (1346 aa).

The N-terminal stretch at 1-21 (MLATTHMLYVLIATCVIPIFG) is a signal peptide. Topologically, residues 22–1021 (AALSKTVLYQ…NQPPKLDYIP (1000 aa)) are extracellular. N-linked (GlcNAc...) asparagine glycans are attached at residues Asn-63, Asn-112, and Asn-126. LRR repeat units lie at residues 97 to 120 (LVELRDLTIEYCKLGNLTDGSFRG), 124 to 146 (LRNLTIRTHNGDWSTMSLEMASN), 151 to 174 (FRQLERLDLSLNNIWLIPDGMVCP), 176 to 198 (KSLQHLNASYNKIQDISNFYFSA), 209 to 232 (GSTLQSLDLSANKMVSLPTAMLSA), 234 to 256 (GRLTHLNMAKNSMSFLADRAFEG), 257 to 280 (LLSLRVVDLSANRLTSLPPELFAE), 282 to 304 (KQLQEIYLRNNSINVLAPGIFGE), 306 to 330 (AELLVLDLASNELNSQWINAATFVG), 331 to 354 (LKRLMMLDLSANKISRLEAHIFRP), 355 to 378 (LASLQILKLEDNYIDQLPGGIFAD), 380 to 402 (TNLHTLILSRNRISVIEQRTLQG), 404 to 426 (KNLLVLSLDFNRISRMDQRSLVN), 427 to 450 (CSQLQDLHLNDNKLQAVPEALAHV), 452 to 473 (LLKTLDVGENMISQIENTSITQ), 474 to 497 (LESLYGLRMTENSLTHIRRGVFDR), 498 to 521 (MSSLQILNLSQNKLKSIEAGSLQR), 523 to 544 (SQLQAIRLDGNQLKSIAGLFTE), 546 to 568 (PNLVWLNISGNRLEKFDYSHIPI), 570 to 591 (LQWLDVRANRITQLGNYFEIES), 593 to 614 (LSLSTFDASYNLLTEITASSIP), 615 to 637 (NSVEVLYLNDNQISKIQPYTFFK), and 638 to 661 (KPNLTRVDLVRNRLTTLEPNALRL). Asn-182 carries an N-linked (GlcNAc...) asparagine glycan. Residue Asn-291 is glycosylated (N-linked (GlcNAc...) asparagine). N-linked (GlcNAc...) asparagine glycosylation occurs at Asn-426. An N-linked (GlcNAc...) asparagine glycan is attached at Asn-468. N-linked (GlcNAc...) asparagine glycosylation is present at Asn-505. A glycan (N-linked (GlcNAc...) asparagine) is linked at Asn-552. Asn-640 is a glycosylation site (N-linked (GlcNAc...) asparagine). Disulfide bonds link Cys-682-Cys-710, Cys-684-Cys-733, Cys-757-Cys-763, and Cys-761-Cys-776. LRR repeat units follow at residues 790–813 (PMDSTQLYLDGNNFRELQSHAFIG), 814–837 (RKRLKVLHLNHSRIEVLHNRTFYG), 838–861 (LLELEVLQLQSNQLKALNGNEFQG), 863–885 (DNLQELYLQHNAIATIDTLTFTH), 887–909 (YHLKILRLDHNAITSFAVWNFLP), and 912–938 (LNELRLASNPWTCSCEFIDKLRDYINR). N-linked (GlcNAc...) asparagine glycans are attached at residues Asn-823 and Asn-832. An intrachain disulfide couples Cys-924 to Cys-950. N-linked (GlcNAc...) asparagine glycans are attached at residues Asn-956 and Asn-1000. Residues 1022 to 1042 (ILVAILTAFIFVMICISLVFI) traverse the membrane as a helical segment. Residues 1043–1346 (FRQEMRVWCH…PTPASRNLHM (304 aa)) lie on the Cytoplasmic side of the membrane. Residues 1074–1209 (KLFDAFVSYS…LFWQKLRFAL (136 aa)) form the TIR domain. Positions 1235 to 1346 (HHHHHVHQQA…PTPASRNLHM (112 aa)) are disordered. The span at 1267–1300 (PGSFRRQPSLHQQQQQQQQIRGNNNTTQQQQQQQ) shows a compositional bias: low complexity.

It belongs to the Toll-like receptor family. In terms of assembly, may interact (via the extracellular domain) with 18w (via the extracellular domain).

Its subcellular location is the cell membrane. The protein resides in the apical cell membrane. Functionally, toll-related receptor. Probably specific to larval innate immunity. Involved in the tracheal immune response of larvae to Gram-negative and perhaps Gram-positive bacteria; upon infection it negatively regulates the immune deficiency (Imd) signaling cascade specifically in the respiratory epithelium to prevent the overexpression of antimicrobial peptides (AMP). Involved in the NF-kappa-B-dependent apoptosis of unfit cells during cell competition. Involved in neuron-specific glycosylation. Positively controls the neuromuscular junction (NMJ) growth in presynaptic motorneurons, probably via the JNK pathway. During development of the peripheral nervous system, may function in the NF-kappa-B (rel) regulatory cascade to repress expression of the neuron-specific genes sc and ase in non-neuronal cells. Promotes heterophilic cell adhesion with 18w in vitro. May have a minor role in leg development. May be involved in determining the proximal cell fate in the wing, possibly by negatively regulating the Dpp signaling pathway. May also be involved in the Dpp signaling pathway in the eye. Possibly functions with 18w and Toll-6 during convergent extension, to help direct proper planar cell polarity, cell intercalation and axis elongation. The sequence is that of Toll-like receptor Tollo from Drosophila melanogaster (Fruit fly).